We begin with the raw amino-acid sequence, 799 residues long: Zinc finger X-linked protein ZXDA (799 aa).

The tract at residues 1–89 (MEIPKLLPAR…QPSGGGDDFF (89 aa)) is disordered. The segment covering 13–26 (LQGGGGGGIPAGGG) has biased composition (gly residues). 10 C2H2-type zinc fingers span residues 267-291 (YLCP…LLTH), 300-324 (FKCP…LQSH), 330-354 (FGCP…MKGH), 360-382 (FKCE…QRSH), 389-413 (YQCA…NRAH), 420-444 (FSCS…LRSH), 450-474 (FLCD…KRKH), 480-504 (FMCP…SITH), 510-534 (FVCP…SKKH), and 543-568 (SRCP…VKRH). The segment at 267-573 (YLCPEALCGQ…MVKRHKVGQD (307 aa)) is required for interaction with ZXDC. The interval 572–699 (QDLLAQLEAA…NMDEVSSVSV (128 aa)) is required for transcriptional activation.

It belongs to the ZXD family. As to quaternary structure, self-associates. Interacts with ZXDC and CIITA. As to expression, may be expressed in brain, heart, kidney, liver, lung, muscle and placenta.

It localises to the nucleus. In terms of biological role, cooperates with CIITA to promote transcription of MHC class I and MHC class II genes. This is Zinc finger X-linked protein ZXDA (ZXDA) from Homo sapiens (Human).